Reading from the N-terminus, the 336-residue chain is Ferrochelatase (336 aa).

Fe cation is bound by residues histidine 206 and glutamate 287.

It belongs to the ferrochelatase family.

The protein localises to the cytoplasm. It catalyses the reaction heme b + 2 H(+) = protoporphyrin IX + Fe(2+). Its pathway is porphyrin-containing compound metabolism; protoheme biosynthesis; protoheme from protoporphyrin-IX: step 1/1. Functionally, catalyzes the ferrous insertion into protoporphyrin IX. This chain is Ferrochelatase, found in Neisseria gonorrhoeae (strain ATCC 700825 / FA 1090).